Reading from the N-terminus, the 426-residue chain is GTPase Obg (426 aa).

Residues 1 to 158 form the Obg domain; the sequence is MFVDEVEIKV…RSIRLELKLV (158 aa). One can recognise an OBG-type G domain in the interval 159–330; it reads ADVGLIGFPN…LIYYTGDLLK (172 aa). GTP contacts are provided by residues 165–172, 190–194, 212–215, 282–285, and 311–313; these read GFPNVGKS, FTTLK, DIPG, NKID, and SAA. The Mg(2+) site is built by Ser-172 and Thr-192. Residues 349–426 form the OCT domain; the sequence is DFADEEENIV…IGPMEFEYME (78 aa).

It belongs to the TRAFAC class OBG-HflX-like GTPase superfamily. OBG GTPase family. Monomer. The cofactor is Mg(2+).

It is found in the cytoplasm. Functionally, an essential GTPase which binds GTP, GDP and possibly (p)ppGpp with moderate affinity, with high nucleotide exchange rates and a fairly low GTP hydrolysis rate. Plays a role in control of the cell cycle, stress response, ribosome biogenesis and in those bacteria that undergo differentiation, in morphogenesis control. This chain is GTPase Obg, found in Halothermothrix orenii (strain H 168 / OCM 544 / DSM 9562).